The sequence spans 489 residues: CUGBP Elav-like family member 1-B (489 aa).

RRM domains are found at residues 16–99 (IKMF…PADS), 108–188 (RKLF…FADT), and 404–482 (ANLF…LKRS).

The protein belongs to the CELF/BRUNOL family. In terms of assembly, oligomer. Oligomerization is required for RNA-binding and EDEN-dependent deadenylation. In terms of processing, phosphorylated during oocyte maturation and dephosphorylated following egg activation. Dephosphorylation is calcium dependent and correlates with the increase in the activity of EDEN-dependent deadenylation.

It is found in the nucleus. The protein resides in the cytoplasm. Its function is as follows. RNA-binding protein implicated in the regulation of several post-transcriptional events. May be involved in pre-mRNA alternative splicing, mRNA translation activation and stability. Mediates the rapid and sequence-specific cytoplasmic deadenylation of EDEN-containing maternal mRNAs following fertilization. Binds to AU-rich sequences (AREs) of jun mRNA. Binds to the embryonic deadenylation element (EDEN) motif localized in the 3'-UTR of maternal mRNAs. Binds to RNA containing several repeats of the consensus sequence 5'-UGU-3'. EDEN-dependent deadenylation is enhanced by the presence of an additional cis element composed of three AUU repeats. This Xenopus laevis (African clawed frog) protein is CUGBP Elav-like family member 1-B (cugbp1-b).